A 712-amino-acid chain; its full sequence is Ribosomal RNA large subunit methyltransferase K/L (712 aa).

The 112-residue stretch at 43–154 (LAYRITLWTR…NGQLTISMNF (112 aa)) folds into the THUMP domain.

This sequence belongs to the methyltransferase superfamily. RlmKL family.

It is found in the cytoplasm. The enzyme catalyses guanosine(2445) in 23S rRNA + S-adenosyl-L-methionine = N(2)-methylguanosine(2445) in 23S rRNA + S-adenosyl-L-homocysteine + H(+). It catalyses the reaction guanosine(2069) in 23S rRNA + S-adenosyl-L-methionine = N(2)-methylguanosine(2069) in 23S rRNA + S-adenosyl-L-homocysteine + H(+). Functionally, specifically methylates the guanine in position 2445 (m2G2445) and the guanine in position 2069 (m7G2069) of 23S rRNA. The chain is Ribosomal RNA large subunit methyltransferase K/L from Shewanella frigidimarina (strain NCIMB 400).